Consider the following 816-residue polypeptide: Mitogen-activated protein kinase 7 (816 aa).

The tract at residues 1 to 26 is disordered; that stretch reads MAEPLKEEDGEDGSAEPPGPVKAEPA. A2 carries the N-acetylalanine modification. Positions 2–77 are required for cytoplasmic targeting; sequence AEPLKEEDGE…VVSSARRRLT (76 aa). Residues 55–347 enclose the Protein kinase domain; that stretch reads YEIIETIGNG…AAAALRHPFL (293 aa). Residues 61–69 and K84 each bind ATP; that span reads IGNGAYGVV. The tract at residues 78 to 139 is required for binding to MAP2K5; sequence GQQVAIKKIP…FKSVYVVLDL (62 aa). The tract at residues 140 to 406 is necessary for oligomerization; it reads MESDLHQIIH…QQIRFQPSLQ (267 aa). D182 (proton acceptor) is an active-site residue. Residues 219 to 221 carry the TXY motif; the sequence is TEY. The interval 406–737 is disordered; the sequence is QPVASEPGCP…PVFSGTPKGS (332 aa). A may not be required for kinase activity; required to stimulate MEF2C activity region spans residues 407 to 806; sequence PVASEPGCPD…REIQMDSPML (400 aa). Pro residues-rich tracts occupy residues 433–445 and 454–463; these read SPPP…PGPA and QPPPPVSEPA. Low complexity predominate over residues 476-486; the sequence is KAALKAALLKS. Basic and acidic residues-rich tracts occupy residues 502-519, 527-544, and 563-573; these read PEPR…EREE, RAKE…KERG, and DNDRSLLERWT. The Nuclear localization signal signature appears at 505-539; that stretch reads RKPVTAQERQREREEKRRRRQERAKEREKRRQERE. A compositionally biased stretch (low complexity) spans 578 to 587; it reads PAAPALTSVP. Pro residues-rich tracts occupy residues 588–610 and 628–655; these read APAP…PGPV and VPQP…PAPP. Residues 676 to 685 show a composition bias toward low complexity; that stretch reads PGSSTPGVLP. Residues 686–695 are compositionally biased toward pro residues; sequence YFPPGLPPPD. The segment covering 701-720 has biased composition (polar residues); the sequence is QSSMSESPDVNLVTQQLSKS. S720 bears the Phosphoserine mark. T733 is modified (phosphothreonine).

It belongs to the protein kinase superfamily. CMGC Ser/Thr protein kinase family. MAP kinase subfamily. Interacts with MAP2K5. Forms oligomers. Interacts with MEF2A, MEF2C and MEF2D; the interaction phosphorylates the MEF2s and enhances transcriptional activity of MEF2A, MEF2C but not MEF2D. Interacts with SGK1. Preferentially interacts with PML isoform PML-4 but shows interaction also with its other isoforms: isoform PML-1, isoform PML-2, isoform PML-3 and isoform PML-6. Interacts (via N-terminal half) with HSP90AB1-CDC37 chaperone complex in resting cells; the interaction is MAP2K5-independent and prevents MAPK7 from ubiquitination and proteasomal degradation. Interacts with STUB1/CHIP; the interaction is enhanced in the presence of IGF1 or MAP2K5 and promotes STUB1/CHIP E3 ligase activity. Mg(2+) serves as cofactor. Dually phosphorylated on Thr-219 and Tyr-221, which activates the enzyme. Autophosphorylated in vitro on threonine and tyrosine residues when the C-terminal part of the kinase, which could have a regulatory role, is absent. In terms of tissue distribution, expressed in many adult tissues. Abundant in heart, placenta, lung, kidney and skeletal muscle. Not detectable in liver.

Its subcellular location is the cytoplasm. It is found in the nucleus. The protein localises to the PML body. It catalyses the reaction L-seryl-[protein] + ATP = O-phospho-L-seryl-[protein] + ADP + H(+). The catalysed reaction is L-threonyl-[protein] + ATP = O-phospho-L-threonyl-[protein] + ADP + H(+). With respect to regulation, activated by tyrosine and threonine phosphorylation. Activated in response to hyperosmolarity, hydrogen peroxide, and epidermal growth factor (EGF). Functionally, plays a role in various cellular processes such as proliferation, differentiation and cell survival. The upstream activator of MAPK7 is the MAPK kinase MAP2K5. Upon activation, it translocates to the nucleus and phosphorylates various downstream targets including MEF2C. EGF activates MAPK7 through a Ras-independent and MAP2K5-dependent pathway. As part of the MAPK/ERK signaling pathway, acts as a negative regulator of apoptosis in cardiomyocytes via interaction with STUB1/CHIP and promotion of STUB1-mediated ubiquitination and degradation of ICER-type isoforms of CREM. May have a role in muscle cell differentiation. May be important for endothelial function and maintenance of blood vessel integrity. MAP2K5 and MAPK7 interact specifically with one another and not with MEK1/ERK1 or MEK2/ERK2 pathways. Phosphorylates SGK1 at Ser-78 and this is required for growth factor-induced cell cycle progression. Involved in the regulation of p53/TP53 by disrupting the PML-MDM2 interaction. The sequence is that of Mitogen-activated protein kinase 7 (MAPK7) from Homo sapiens (Human).